The chain runs to 343 residues: Probable dual-specificity RNA methyltransferase RlmN (343 aa).

The active-site Proton acceptor is Glu-94. The Radical SAM core domain maps to 100–330 (YDSRVTVCVS…ATVRMSMGSD (231 aa)). Cys-107 and Cys-335 are disulfide-bonded. Residues Cys-114, Cys-118, and Cys-121 each coordinate [4Fe-4S] cluster. Residues 161–162 (GE), Ser-193, 216–218 (SLH), and Asn-292 contribute to the S-adenosyl-L-methionine site. Residue Cys-335 is the S-methylcysteine intermediate of the active site.

The protein belongs to the radical SAM superfamily. RlmN family. The cofactor is [4Fe-4S] cluster.

It localises to the cytoplasm. It carries out the reaction adenosine(2503) in 23S rRNA + 2 reduced [2Fe-2S]-[ferredoxin] + 2 S-adenosyl-L-methionine = 2-methyladenosine(2503) in 23S rRNA + 5'-deoxyadenosine + L-methionine + 2 oxidized [2Fe-2S]-[ferredoxin] + S-adenosyl-L-homocysteine. The catalysed reaction is adenosine(37) in tRNA + 2 reduced [2Fe-2S]-[ferredoxin] + 2 S-adenosyl-L-methionine = 2-methyladenosine(37) in tRNA + 5'-deoxyadenosine + L-methionine + 2 oxidized [2Fe-2S]-[ferredoxin] + S-adenosyl-L-homocysteine. Specifically methylates position 2 of adenine 2503 in 23S rRNA and position 2 of adenine 37 in tRNAs. This chain is Probable dual-specificity RNA methyltransferase RlmN, found in Clostridioides difficile (strain 630) (Peptoclostridium difficile).